We begin with the raw amino-acid sequence, 284 residues long: Bifunctional protein FolD (284 aa).

Residues 165–167 (GRS), Ser-190, and Ile-231 each bind NADP(+).

This sequence belongs to the tetrahydrofolate dehydrogenase/cyclohydrolase family. Homodimer.

It carries out the reaction (6R)-5,10-methylene-5,6,7,8-tetrahydrofolate + NADP(+) = (6R)-5,10-methenyltetrahydrofolate + NADPH. It catalyses the reaction (6R)-5,10-methenyltetrahydrofolate + H2O = (6R)-10-formyltetrahydrofolate + H(+). It functions in the pathway one-carbon metabolism; tetrahydrofolate interconversion. Functionally, catalyzes the oxidation of 5,10-methylenetetrahydrofolate to 5,10-methenyltetrahydrofolate and then the hydrolysis of 5,10-methenyltetrahydrofolate to 10-formyltetrahydrofolate. The polypeptide is Bifunctional protein FolD (Clostridium kluyveri (strain ATCC 8527 / DSM 555 / NBRC 12016 / NCIMB 10680 / K1)).